The sequence spans 332 residues: Glycerol-3-phosphate dehydrogenase [NAD(P)+] (332 aa).

4 residues coordinate NADPH: S11, F12, K32, and K106. Positions 106, 137, and 139 each coordinate sn-glycerol 3-phosphate. Residue A141 coordinates NADPH. Sn-glycerol 3-phosphate is bound by residues K192, D245, S255, R256, and N257. K192 serves as the catalytic Proton acceptor. R256 is an NADPH binding site. NADPH-binding residues include V280 and E282.

The protein belongs to the NAD-dependent glycerol-3-phosphate dehydrogenase family.

Its subcellular location is the cytoplasm. The catalysed reaction is sn-glycerol 3-phosphate + NAD(+) = dihydroxyacetone phosphate + NADH + H(+). The enzyme catalyses sn-glycerol 3-phosphate + NADP(+) = dihydroxyacetone phosphate + NADPH + H(+). The protein operates within membrane lipid metabolism; glycerophospholipid metabolism. Catalyzes the reduction of the glycolytic intermediate dihydroxyacetone phosphate (DHAP) to sn-glycerol 3-phosphate (G3P), the key precursor for phospholipid synthesis. The chain is Glycerol-3-phosphate dehydrogenase [NAD(P)+] from Staphylococcus aureus (strain Mu3 / ATCC 700698).